Consider the following 316-residue polypeptide: Ornithine carbamoyltransferase (316 aa).

Residues 57-60, glutamine 84, arginine 108, and 135-138 each bind carbamoyl phosphate; these read STRT and HPCQ. Residues asparagine 166, aspartate 230, and 234–235 each bind L-ornithine; that span reads SM. Carbamoyl phosphate is bound by residues 269–270 and arginine 297; that span reads CL.

Belongs to the aspartate/ornithine carbamoyltransferase superfamily. OTCase family.

The protein resides in the cytoplasm. It catalyses the reaction carbamoyl phosphate + L-ornithine = L-citrulline + phosphate + H(+). The protein operates within amino-acid degradation; L-arginine degradation via ADI pathway; carbamoyl phosphate from L-arginine: step 2/2. In terms of biological role, reversibly catalyzes the transfer of the carbamoyl group from carbamoyl phosphate (CP) to the N(epsilon) atom of ornithine (ORN) to produce L-citrulline. The chain is Ornithine carbamoyltransferase from Bacillus cereus (strain 03BB102).